We begin with the raw amino-acid sequence, 414 residues long: Serine hydroxymethyltransferase (414 aa).

(6S)-5,6,7,8-tetrahydrofolate contacts are provided by residues leucine 118 and 122–124 (GHL). N6-(pyridoxal phosphate)lysine is present on lysine 227. (6S)-5,6,7,8-tetrahydrofolate contacts are provided by residues glutamate 240 and 350-352 (SPF).

It belongs to the SHMT family. In terms of assembly, homodimer. Pyridoxal 5'-phosphate is required as a cofactor.

The protein localises to the cytoplasm. It carries out the reaction (6R)-5,10-methylene-5,6,7,8-tetrahydrofolate + glycine + H2O = (6S)-5,6,7,8-tetrahydrofolate + L-serine. It functions in the pathway one-carbon metabolism; tetrahydrofolate interconversion. It participates in amino-acid biosynthesis; glycine biosynthesis; glycine from L-serine: step 1/1. Its function is as follows. Catalyzes the reversible interconversion of serine and glycine with tetrahydrofolate (THF) serving as the one-carbon carrier. This reaction serves as the major source of one-carbon groups required for the biosynthesis of purines, thymidylate, methionine, and other important biomolecules. Also exhibits THF-independent aldolase activity toward beta-hydroxyamino acids, producing glycine and aldehydes, via a retro-aldol mechanism. The chain is Serine hydroxymethyltransferase from Bacillus cereus (strain ZK / E33L).